The sequence spans 77 residues: Conotoxin Vc1 (77 aa).

The N-terminal stretch at 1–22 is a signal peptide; that stretch reads MRTSGRLLLLCLAVGLLLESQA. 2 consecutive propeptides follow at residues 23 to 58 and 73 to 77; these read HPNA…KGQR and RRSFY.

This sequence belongs to the conotoxin H superfamily. Expressed by the venom duct.

Its subcellular location is the secreted. Its function is as follows. Probable toxin. This Conus victoriae (Queen Victoria cone) protein is Conotoxin Vc1.